The primary structure comprises 135 residues: HTH-type transcriptional regulator DicA (135 aa).

An HTH cro/C1-type domain is found at 12-66; it reads IRYRRKNLKHTQRSLAKALKISHVSVSQWERGDSEPTGKNLFALSKVLQCSPTWI. Residues 23 to 42 constitute a DNA-binding region (H-T-H motif); the sequence is QRSLAKALKISHVSVSQWER.

In terms of biological role, this protein is a repressor of division inhibition gene dicB. This Escherichia coli (strain K12) protein is HTH-type transcriptional regulator DicA (dicA).